Reading from the N-terminus, the 1060-residue chain is RNA-binding protein 27 (1060 aa).

Disordered regions lie at residues 80–143 (PLEP…DGKW), 160–278 (YDWR…PKRR), and 319–416 (PPPG…PPPL). Basic and acidic residues-rich tracts occupy residues 84–102 (VKPE…KEEV) and 124–143 (SRSE…DGKW). The span at 165–185 (GRSKSRSKSRGLSRSRSRSRG) shows a compositional bias: basic residues. A compositionally biased stretch (basic and acidic residues) spans 186-211 (RSKDRDPNRNVEHRERSKFKSERNDL). Low complexity-rich tracts occupy residues 225-235 (SSEQYSSGAQS) and 255-268 (SWSN…SSNS). The C3H1-type zinc finger occupies 273–301 (PPPKRRCRDYDERGFCVLGDLCQFDHGND). Pro residues-rich tracts occupy residues 319 to 356 (PPPG…PGPG) and 371 to 384 (QPPP…PRPP). The segment covering 387–402 (QSSLINSRDQPGTSAV) has biased composition (polar residues). Thr447 carries the post-translational modification Phosphothreonine. Omega-N-methylarginine is present on Arg455. A disordered region spans residues 572 to 594 (LTKKPWLGKQGNNNQSKPGFLRK). Residues 600-674 (TKLEVKKIPQ…RFIRVLWHRE (75 aa)) enclose the RRM domain. The tract at residues 754-775 (HASTNQSDTSHLLNQTGGSSGE) is disordered. Polar residues predominate over residues 755–770 (ASTNQSDTSHLLNQTG). Positions 810 to 887 (VQEVLKKKQE…KDELKTSSTV (78 aa)) form a coiled coil. The residue at position 928 (Ser928) is a Phosphoserine. Positions 943–982 (GRGKTISSQGRGRGRGRGRGRGSLNHMVVDHRPKALPGGG) are disordered. A phosphoserine mark is found at Ser1012 and Ser1020. The interval 1014 to 1060 (HKPKVPSISTETEEEEVKEEETETSDLFLHDDDDEDEDEYESRSWRR) is disordered. Acidic residues-rich tracts occupy residues 1024–1037 (ETEE…ETET) and 1044–1053 (DDDDEDEDEY).

It is found in the cytoplasm. The protein localises to the nucleus speckle. May be involved in the turnover of nuclear polyadenylated (pA+) RNA. The sequence is that of RNA-binding protein 27 from Mus musculus (Mouse).